The following is a 477-amino-acid chain: Polyketide synthase-related protein Dhc1 (477 aa).

The Carrier domain maps to 34-112 (EKMTVREGEL…AMTHCVFDRA (79 aa)). At Ser72 the chain carries O-(pantetheine 4'-phosphoryl)serine. The ketoreductase (KR) domain stretch occupies residues 161-322 (LTGATSFLGS…AGEVFLENLV (162 aa)). The segment at 410–435 (VQQQQQQQQRQSQPPRDDAADGSPTE) is disordered. Residues 411 to 422 (QQQQQQQQRQSQ) show a composition bias toward low complexity. A compositionally biased stretch (basic and acidic residues) spans 424-435 (PRDDAADGSPTE).

It functions in the pathway mycotoxin biosynthesis. Polyketide synthase-related protein; part of the gene cluster that mediates the biosynthesis of 10,11-dehydrocurvularin, a prevalent fungal phytotoxin with heat shock response and immune-modulatory activities. The highly reducing polyketide synthase Dhc3 is responsible for biosynthesis up to the tetraketide stage. The non-reducing polyketide synthase Dhc5 then conducts four additional chain extension cycles, producing the unreduced part of the nascent octaketide from C-1 to C-8 in 10,11-dehydrocurvularin. The role of Dhc1 in 10,11-dehydrocurvularin biosynthesis has not been identified yet. This chain is Polyketide synthase-related protein Dhc1, found in Alternaria cinerariae.